Reading from the N-terminus, the 271-residue chain is MPSYVITGASRGLGFEFVRQLSSDPNNTVIGLVRDKVTTEQAVAQELAGRSNIHILQADITDYEAVKDAVTATAQITGGVLDYLVANAAYISEFDAYDSIGVLGNSPKELEEDLFKSFKVNVIANVHLFNLYMPLILAGNIKKVIALSTGMADLDSTNKFELQVAPGYAISKAAMNTAIGKFHAQYKKDGVLFMSISPGVVDTGHYKNATPEQMAKVGGMFQNFVTYNPDFKGPASPEASVKDVISVWENASIEAGSGGSFVSHHGNKKWL.

The NADP(+) site is built by L13, D59, N87, Y168, K172, V201, and T203. Y168 functions as the Proton donor in the catalytic mechanism. The active-site Lowers pKa of active site Tyr is the K172.

Belongs to the short-chain dehydrogenases/reductases (SDR) family.

It participates in secondary metabolite biosynthesis. Short chain dehydrogenase; part of the gene cluster that mediates the biosynthesis of virensols and trichoxide, fungal natural products that contain or are derived from a salicylaldehyde core. The pathway begins with the synthesis of the reduced chain in virensol C by the highly reducing polyketide synthase virA via condensation of one acetate and 8 malonate units. VirA has interesting programming rules since the first 2 ketides are fully reduced, the 3 following ketides undergo beta-dehydration, and the last 3 ketides are only reduced to beta-hydroxys to yield the trihydroxy portion. The production of aldehyde virensol C by virA alone is surprising, since virA does not contain a reductase (R) domain that is typically associated with reductive product release in HRPKS. The cupin-domain enzyme virC is involved in enhancing virA product turnover. The short-chain dehydrogenase virB then oxidizes the C-7 alcohol of virensol C to a ketone, yielding virensol D. Virensol D is further transformed to salicylaldehyde 5-deoxyaurocitrin by the short-chain dehydrogenase virD. VirD catalyzes the dehydrogenation of C-3 to form the beta-ketone aldehyde, which is followed by the generation of the nucleophilic C-2 that is required for the intramolecular aldol condensation between C-2 and C-7, itself followed by dehydration and aromatization which leads to salicylaldehyde 5-deoxyaurocitrin. While the dehydrogenation of virensol D is definitely catalyzed by virD, the aldol condensation and dehydration may be uncatalyzed or assisted by virD. The short chain dehydrogenase virG then converts salicylaldehyde 5-deoxyaurocitrin into virensol B which is further hydroxylated by the cytochrome P450 monooxygenase virE to yield the hydroquinone virensol A. VirI then may oxidize virensol A to form the quinone, while virH performs the epoxidation. Finally, the two remaining short-chain dehydrogenases, virK and virL, are probably responsible for reducing the ketones to the corresponding alcohols to furnish the epoxycyclohexanol structure in trichoxide. In Hypocrea virens (strain Gv29-8 / FGSC 10586) (Gliocladium virens), this protein is Short chain dehydrogenase virK.